A 389-amino-acid polypeptide reads, in one-letter code: Galactokinase (389 aa).

34 to 37 contributes to the substrate binding site; it reads EHTD. ATP is bound by residues serine 68 and 125 to 131; that span reads GSGLSSS. Serine 131 and glutamate 163 together coordinate Mg(2+). Aspartate 175 acts as the Proton acceptor in catalysis. A substrate-binding site is contributed by tyrosine 225.

Belongs to the GHMP kinase family. GalK subfamily.

It localises to the cytoplasm. The enzyme catalyses alpha-D-galactose + ATP = alpha-D-galactose 1-phosphate + ADP + H(+). It participates in carbohydrate metabolism; galactose metabolism. In terms of biological role, catalyzes the transfer of the gamma-phosphate of ATP to D-galactose to form alpha-D-galactose-1-phosphate (Gal-1-P). This is Galactokinase from Clostridium beijerinckii (strain ATCC 51743 / NCIMB 8052) (Clostridium acetobutylicum).